The following is a 366-amino-acid chain: Carbamoyl phosphate synthase small chain (366 aa).

Residues 1-171 are CPSase; the sequence is MLEKRYLVLE…KTPYVSTGSD (171 aa). 3 residues coordinate L-glutamine: Ser47, Gly221, and Gly223. The Glutamine amidotransferase type-1 domain maps to 173–360; it reads SVVLLDFGKK…IAMMKDFKEK (188 aa). Catalysis depends on Cys248, which acts as the Nucleophile. L-glutamine contacts are provided by Leu249, Gln252, Asn290, Gly292, and Tyr293. Residues His333 and Glu335 contribute to the active site.

Belongs to the CarA family. As to quaternary structure, composed of two chains; the small (or glutamine) chain promotes the hydrolysis of glutamine to ammonia, which is used by the large (or ammonia) chain to synthesize carbamoyl phosphate. Tetramer of heterodimers (alpha,beta)4.

The catalysed reaction is hydrogencarbonate + L-glutamine + 2 ATP + H2O = carbamoyl phosphate + L-glutamate + 2 ADP + phosphate + 2 H(+). It catalyses the reaction L-glutamine + H2O = L-glutamate + NH4(+). It functions in the pathway amino-acid biosynthesis; L-arginine biosynthesis; carbamoyl phosphate from bicarbonate: step 1/1. Its pathway is pyrimidine metabolism; UMP biosynthesis via de novo pathway; (S)-dihydroorotate from bicarbonate: step 1/3. Its function is as follows. Small subunit of the glutamine-dependent carbamoyl phosphate synthetase (CPSase). CPSase catalyzes the formation of carbamoyl phosphate from the ammonia moiety of glutamine, carbonate, and phosphate donated by ATP, constituting the first step of 2 biosynthetic pathways, one leading to arginine and/or urea and the other to pyrimidine nucleotides. The small subunit (glutamine amidotransferase) binds and cleaves glutamine to supply the large subunit with the substrate ammonia. The polypeptide is Carbamoyl phosphate synthase small chain (Staphylococcus epidermidis (strain ATCC 12228 / FDA PCI 1200)).